The chain runs to 605 residues: UvrABC system protein C (605 aa).

The GIY-YIG domain occupies 15–92; that stretch reads GLPGCYLMKN…IQKHQPYFNI (78 aa). The region spanning 197 to 232 is the UVR domain; it reads GHAKKDLTQRMEKAAADMAYERAGDLRDQIRYIEAT.

Belongs to the UvrC family. In terms of assembly, interacts with UvrB in an incision complex.

Its subcellular location is the cytoplasm. In terms of biological role, the UvrABC repair system catalyzes the recognition and processing of DNA lesions. UvrC both incises the 5' and 3' sides of the lesion. The N-terminal half is responsible for the 3' incision and the C-terminal half is responsible for the 5' incision. The polypeptide is UvrABC system protein C (Levilactobacillus brevis (strain ATCC 367 / BCRC 12310 / CIP 105137 / JCM 1170 / LMG 11437 / NCIMB 947 / NCTC 947) (Lactobacillus brevis)).